The primary structure comprises 485 residues: N-succinylglutamate 5-semialdehyde dehydrogenase (485 aa).

Position 220-225 (220-225 (GSANTG)) interacts with NAD(+). Catalysis depends on residues Glu-243 and Cys-278.

This sequence belongs to the aldehyde dehydrogenase family. AstD subfamily.

The enzyme catalyses N-succinyl-L-glutamate 5-semialdehyde + NAD(+) + H2O = N-succinyl-L-glutamate + NADH + 2 H(+). It participates in amino-acid degradation; L-arginine degradation via AST pathway; L-glutamate and succinate from L-arginine: step 4/5. Catalyzes the NAD-dependent reduction of succinylglutamate semialdehyde into succinylglutamate. This Vibrio cholerae serotype O1 (strain ATCC 39541 / Classical Ogawa 395 / O395) protein is N-succinylglutamate 5-semialdehyde dehydrogenase.